Here is a 165-residue protein sequence, read N- to C-terminus: 3-isopropylmalate dehydratase small subunit 2 (165 aa).

Belongs to the LeuD family. LeuD type 2 subfamily. Heterodimer of LeuC and LeuD.

The catalysed reaction is (2R,3S)-3-isopropylmalate = (2S)-2-isopropylmalate. The protein operates within amino-acid biosynthesis; L-leucine biosynthesis; L-leucine from 3-methyl-2-oxobutanoate: step 2/4. Its function is as follows. Catalyzes the isomerization between 2-isopropylmalate and 3-isopropylmalate, via the formation of 2-isopropylmaleate. This Archaeoglobus fulgidus (strain ATCC 49558 / DSM 4304 / JCM 9628 / NBRC 100126 / VC-16) protein is 3-isopropylmalate dehydratase small subunit 2 (leuD2).